The chain runs to 322 residues: Solute carrier family 35 member B1 (322 aa).

8 helical membrane passes run 12–32 (LRLPLCFLGVFVCYFYYGILQ), 51–71 (FALTLVFIQCVINAMFAKILI), 85–105 (WLYAACSVSYVGAMVSSNSAL), 136–156 (YPLAKYLCVLLIVAGVALFMY), 168–188 (TVGFGELLLLMSLTLDGLTGV), 210–230 (LWSTFLLGAGILFTGELWEFL), 243–263 (ILLFGLTSALGQSFIFMTVVY), and 285–305 (VILFANPISSMQWVGTVLVFL). The Di-lysine motif signature appears at 318–322 (KKTSH).

The protein belongs to the nucleotide-sugar transporter family. SLC35B subfamily.

It is found in the endoplasmic reticulum membrane. The enzyme catalyses ADP(in) + ATP(out) = ADP(out) + ATP(in). It catalyses the reaction UDP(out) + ATP(in) = UDP(in) + ATP(out). It carries out the reaction UTP(out) + ATP(in) = UTP(in) + ATP(out). The catalysed reaction is dATP(out) + ATP(in) = dATP(in) + ATP(out). Its function is as follows. ATP:ADP antiporter that catalyzes the exchange of ATP and ADP across the endoplasmic reticulum (ER) membrane. Imports ATP from the cytosol to the ER lumen and exports ADP in the opposite direction. Regulates ER energy metabolism and protein biogenesis. Appears to be part of a calcium-dependent ER to cytosol low energy response axis, where calcium efflux from ER to the cytosol triggers ATP import into the ER lumen to maintain sufficient ATP supply. Provides ATP to ER chaperone HSPA5 that drives protein folding and trafficking in the ER. Can transport dATP, UTP or UDP in exchange for ATP, but the physiological relevance of this process remains to be established. This is Solute carrier family 35 member B1 (Slc35b1) from Mus musculus (Mouse).